We begin with the raw amino-acid sequence, 132 residues long: Small ribosomal subunit protein uS8 (132 aa).

It belongs to the universal ribosomal protein uS8 family. In terms of assembly, part of the 30S ribosomal subunit. Contacts proteins S5 and S12.

Its function is as follows. One of the primary rRNA binding proteins, it binds directly to 16S rRNA central domain where it helps coordinate assembly of the platform of the 30S subunit. The polypeptide is Small ribosomal subunit protein uS8 (Anoxybacillus flavithermus (strain DSM 21510 / WK1)).